We begin with the raw amino-acid sequence, 151 residues long: Ribosome maturation factor RimP (151 aa).

It belongs to the RimP family.

It is found in the cytoplasm. Functionally, required for maturation of 30S ribosomal subunits. In Haemophilus influenzae (strain PittEE), this protein is Ribosome maturation factor RimP.